A 499-amino-acid chain; its full sequence is Interferon regulatory factor 5 (499 aa).

Positions 12 to 18 (PRRVRLK) match the Nuclear localization signal motif. Residues 14–122 (RVRLKPWLVA…QPYKVYEVCS (109 aa)) constitute a DNA-binding region (IRF tryptophan pentad repeat). The tract at residues 121 to 142 (CSNGPAPAESQPSEDNAEEEEE) is disordered. The short motif at 145 to 155 (LQKMLPGLSIT) is the Nuclear export signal element. A phosphoserine; by TBK1 mark is found at S153 and S294. A Phosphoserine modification is found at S302. Residues K412 and K413 each participate in a glycyl lysine isopeptide (Lys-Gly) (interchain with G-Cter in ubiquitin) cross-link. 5 positions are modified to phosphoserine: S432, S436, S438, S441, and S447.

It belongs to the IRF family. In terms of assembly, homodimer, when phosphorylated. Interacts with TASL (via pLxIS motif); interaction takes place downstream of TLR7, TLR8 or TLR9, leading to its activation. Interacts with MYD88 and TRAF6. Phosphorylation of serine and threonine residues by IKBKB in a C-terminal autoinhibitory region, stimulates dimerization, transport into the nucleus, assembly with the coactivator CBP/EP300 and initiation of transcription. Post-translationally, 'Lys-63'-linked polyubiquitination by TRAF6 is required for activation.

Its subcellular location is the cytoplasm. The protein localises to the nucleus. Its activity is regulated as follows. Maintained as a monomer in an autoinhibited state. Phosphorylation and activation follow the following steps: innate adapter protein TASL recruits IRF5, thereby licensing IRF5 for phosphorylation by IKBKB. Phosphorylated IRF5 dissociates from the adapter proteins, dimerizes, and then enters the nucleus to induce IFNs. In terms of biological role, transcription factor that plays a critical role in innate immunity by activating expression of type I interferon (IFN) IFNA and INFB and inflammatory cytokines downstream of endolysosomal toll-like receptors TLR7, TLR8 and TLR9. Regulates the transcription of type I IFN genes (IFN-alpha and IFN-beta) and IFN-stimulated genes (ISG) by binding to an interferon-stimulated response element (ISRE) in their promoters. Can efficiently activate both the IFN-beta (IFNB) and the IFN-alpha (IFNA) genes and mediate their induction downstream of the TLR-activated, MyD88-dependent pathway. The polypeptide is Interferon regulatory factor 5 (Bos taurus (Bovine)).